The sequence spans 313 residues: Small ribosomal subunit protein uS2 (313 aa).

Basic and acidic residues predominate over residues 228–256; it reads RQEDKAAEAQDKDAQDTEDNKGARPRGAE. Residues 228-313 form a disordered region; the sequence is RQEDKAAEAQ…VSKAGDKPKK (86 aa).

This sequence belongs to the universal ribosomal protein uS2 family.

This is Small ribosomal subunit protein uS2 from Amoebophilus asiaticus (strain 5a2).